The following is a 308-amino-acid chain: Isoaspartyl peptidase/L-asparaginase (308 aa).

Met-1 bears the N-acetylmethionine mark. Catalysis depends on Thr-168, which acts as the Nucleophile. Substrate is bound by residues Arg-196–Asp-199 and Thr-219–Gly-222.

Belongs to the Ntn-hydrolase family. As to quaternary structure, heterodimer of an alpha and beta chain produced by autocleavage. This heterodimer may then dimerize in turn, giving rise to a heterotetramer. In terms of processing, cleaved into an alpha and beta chain by autocatalysis; this activates the enzyme. The N-terminal residue of the beta subunit is responsible for the nucleophile hydrolase activity. In terms of tissue distribution, expressed in brain, kidney, testis and tissues of the gastrointestinal tract. Present in sperm (at protein level). Over-expressed in uterine, mammary, prostatic and ovarian carcinoma.

The protein localises to the cytoplasm. The catalysed reaction is L-asparagine + H2O = L-aspartate + NH4(+). The enzyme catalyses Cleavage of a beta-linked Asp residue from the N-terminus of a polypeptide.. With respect to regulation, glycine accelerates autocleavage into an alpha and beta chain. Functionally, has both L-asparaginase and beta-aspartyl peptidase activity. May be involved in the production of L-aspartate, which can act as an excitatory neurotransmitter in some brain regions. Is highly active with L-Asp beta-methyl ester. Besides, has catalytic activity toward beta-aspartyl dipeptides and their methyl esters, including beta-L-Asp-L-Phe, beta-L-Asp-L-Phe methyl ester (aspartame), beta-L-Asp-L-Ala, beta-L-Asp-L-Leu and beta-L-Asp-L-Lys. Does not have aspartylglucosaminidase activity and is inactive toward GlcNAc-L-Asn. Likewise, has no activity toward glutamine. This is Isoaspartyl peptidase/L-asparaginase (ASRGL1) from Homo sapiens (Human).